Here is a 251-residue protein sequence, read N- to C-terminus: Cyclohexanol dehydrogenase (251 aa).

The NAD(+) site is built by Asp42, Asn95, Tyr161, Lys165, Ile194, and Thr196. Tyr161 (proton acceptor) is an active-site residue.

This sequence belongs to the short-chain dehydrogenases/reductases (SDR) family.

It carries out the reaction cyclohexanol + NAD(+) = cyclohexanone + NADH + H(+). Catalyzes the oxidation of cyclohexanol to cyclohexanone. Required for the conversion of cyclohexanol to adipic acid. This is Cyclohexanol dehydrogenase from Acinetobacter sp. (strain SE19).